The following is an 89-amino-acid chain: Large ribosomal subunit protein bL31B (89 aa).

This sequence belongs to the bacterial ribosomal protein bL31 family. Type B subfamily. In terms of assembly, part of the 50S ribosomal subunit.

In Corynebacterium aurimucosum (strain ATCC 700975 / DSM 44827 / CIP 107346 / CN-1) (Corynebacterium nigricans), this protein is Large ribosomal subunit protein bL31B.